Consider the following 359-residue polypeptide: Histidinol-phosphate aminotransferase (359 aa).

At K212 the chain carries N6-(pyridoxal phosphate)lysine.

Belongs to the class-II pyridoxal-phosphate-dependent aminotransferase family. Histidinol-phosphate aminotransferase subfamily. In terms of assembly, homodimer. Requires pyridoxal 5'-phosphate as cofactor.

The enzyme catalyses L-histidinol phosphate + 2-oxoglutarate = 3-(imidazol-4-yl)-2-oxopropyl phosphate + L-glutamate. It functions in the pathway amino-acid biosynthesis; L-histidine biosynthesis; L-histidine from 5-phospho-alpha-D-ribose 1-diphosphate: step 7/9. The chain is Histidinol-phosphate aminotransferase from Buchnera aphidicola subsp. Schlechtendalia chinensis.